We begin with the raw amino-acid sequence, 171 residues long: Replication restart protein PriC (171 aa).

This sequence belongs to the PriC family. In terms of assembly, monomer. Component of the replication restart primosome, which is composed of PriA, PriB, PriC, DnaBe and DnaT; DnaG primase associates transiently with this complex. Interacts with the C-terminus of SSB. SSB interaction is required to load the main replicative helicase onto substrate replication forks. Interacts with helicase DnaB alone and in the DnaB-DnaC complex, probably 1:1 binding with DnaB.

Involved in the restart of stalled replication forks, which reloads the DnaB replicative helicase on sites other than the origin of replication. In vitro can load (E.coli) DnaB replicative helicase from a DnaB-DnaC complex on a single-stranded DNA (ssDNA)-binding protein (SSB)-coated stalled replication fork with no leading- or lagging-strand in the absence of other primosome proteins (PriA, PriB or DnaT). Binds SSB (tested with E.coli protein) and ssDNA. Complements priC in an E.coli priB-priC double deletion. The protein is Replication restart protein PriC of Cronobacter sakazakii (strain ATCC BAA-894) (Enterobacter sakazakii).